The chain runs to 579 residues: Zinc metalloproteinase nas-11 (579 aa).

Positions 1 to 17 are cleaved as a signal peptide; that stretch reads MTPSLVFLIVVIVVVEG. A propeptide spanning residues 18-328 is cleaved from the precursor; it reads QGWRPWDRFN…AAPGSSRLKK (311 aa). The disordered stretch occupies residues 35–58; it reads WGGNNWGTRQRNQEPHDIPPPVPP. Residue N256 is glycosylated (N-linked (GlcNAc...) asparagine). Residues 293-312 are compositionally biased toward acidic residues; that stretch reads GDDEIPLPDADTDDEDDDDS. The interval 293 to 323 is disordered; the sequence is GDDEIPLPDADTDDEDDDDSTNSASGAAPGS. Residues 329–536 form the Peptidase M12A domain; it reads SALYFEGNLI…IELLKKMYCQ (208 aa). Cystine bridges form between C375/C535, C401/C421, C539/C575, C546/C568, and C555/C572. Zn(2+) is bound at residue H430. E431 is a catalytic residue. H434 and H440 together coordinate Zn(2+). A glycan (N-linked (GlcNAc...) asparagine) is linked at N454. Residues 539 to 575 form the ShKT domain; the sequence is CDDKNVYCGAWALKDLCKNPGHDQYMAANCKKSCGLC.

Zn(2+) is required as a cofactor. Expressed in the anterior part of the intestine, CEP neurons and to a lesser extent in hypodermis.

It localises to the secreted. Its function is as follows. Metalloprotease. This Caenorhabditis elegans protein is Zinc metalloproteinase nas-11 (nas-11).